Here is a 91-residue protein sequence, read N- to C-terminus: uncharacterized protein (91 aa).

The helical transmembrane segment at 7–23 threads the bilayer; sequence IALVGVVVVLFGALRYQ.

It is found in the membrane. This is an uncharacterized protein from Haemophilus influenzae (strain ATCC 51907 / DSM 11121 / KW20 / Rd).